We begin with the raw amino-acid sequence, 221 residues long: MFQGQRGWFCGSVSHDLRQFWVAEGGTISDPRAADFLFSCDASHPDTLRIYQSLDYIEDNATVFHAYYLSAVANAEIKNSVALGHFILPPASLQKEIRRKIGSFIWEQDQHFLIEKHDEVTSNELKVFRESSVLATDHKKDLSKSTEKHFIRTPVVEKQMYFPLQHYPVNNMVTGYISIDAMKKFLGELHDFIPGSSGYLAYHVQNEINMSAIKNKLKNKY.

It belongs to the TERB2 family. As to quaternary structure, component of the MAJIN-TERB1-TERB2 complex, composed of MAJIN, TERB1 and TERB2.

The protein localises to the chromosome. The protein resides in the telomere. It is found in the nucleus inner membrane. Its function is as follows. Meiosis-specific telomere-associated protein involved in meiotic telomere attachment to the nucleus inner membrane, a crucial step for homologous pairing and synapsis. Component of the MAJIN-TERB1-TERB2 complex, which promotes telomere cap exchange by mediating attachment of telomeric DNA to the inner nuclear membrane and replacement of the protective cap of telomeric chromosomes: in early meiosis, the MAJIN-TERB1-TERB2 complex associates with telomeric DNA and the shelterin/telosome complex. During prophase, the complex matures and promotes release of the shelterin/telosome complex from telomeric DNA. The chain is Telomere repeats-binding bouquet formation protein 2 from Bos taurus (Bovine).